We begin with the raw amino-acid sequence, 832 residues long: Golgin subfamily A member 6-like protein 24 (832 aa).

5 disordered regions span residues 1-107, 303-333, 351-431, 508-652, and 664-832; these read MWPQ…QEAL, QEQE…MRRQ, MHEQ…EMWR, QEEM…EQEE, and QEEM…MQEH. Residues 13 to 27 are compositionally biased toward basic residues; the sequence is LPTHPHLPTHPHLPT. A compositionally biased stretch (basic and acidic residues) spans 37-58; that stretch reads MSKETRQSKLAEAKEQLTDHHP. 2 stretches are compositionally biased toward polar residues: residues 59–69 and 77–89; these read QTNPSVGTAAS and NNGT…TSGG. Residues 92–107 show a composition bias toward basic and acidic residues; the sequence is SPEDEQKASHQHQEAL. Residues 163–828 are a coiled coil; that stretch reads LEQALSAVAT…EVRLRQQEEK (666 aa). Composition is skewed to basic and acidic residues over residues 664–684 and 692–832; these read QEEM…KMWE and QEEK…MQEH.

The protein belongs to the GOLGA6 family.

The chain is Golgin subfamily A member 6-like protein 24 from Homo sapiens (Human).